The chain runs to 506 residues: MARLALLSVSNKTGLIDLARRLVEEFEFDLISSGGTAQALKDAGLPVTKVADYTGSPEILGGRVKTLHPRIHGGILARRDVPSDLTDLENNQIRPIDLVVVNLYPFEETIAKPGVTLAEAVEQIDIGGPAMLRASSKNFAHLTVLCDPAQYDEYLQELRQNNGVASLEFRQKAALKGFLHTASYDSAIASYLSGTQQHTLNGTELQSLRYGENPHQPAAWYQTGTTPTGWTAAKKLQGKELSYNNLVDLEAARRIIAEFTDTPAATIIKHTNPCGTALADTIVEAYQKAFNADATSAFGGIVALNRPIDAATASELTKTFLECVVAPDCDAEAQKILAKKSNVRVLTLADLSTGPKTLVKQIAGGFLVQAADDIAADTIQWQVVTERQPTADELAELLFAWKVCKHVKSNAIVVTSDRTTLGVGAGQMNRIGSTKIALEQAGDKAKGAILASDGFFPFDDTVRTAAAAGISAIVQPGGSLRDQDSVKAANELGLLMVLTGVRHFLH.

In terms of domain architecture, MGS-like spans 1–146 (MARLALLSVS…KNFAHLTVLC (146 aa)).

This sequence belongs to the PurH family.

It carries out the reaction (6R)-10-formyltetrahydrofolate + 5-amino-1-(5-phospho-beta-D-ribosyl)imidazole-4-carboxamide = 5-formamido-1-(5-phospho-D-ribosyl)imidazole-4-carboxamide + (6S)-5,6,7,8-tetrahydrofolate. The enzyme catalyses IMP + H2O = 5-formamido-1-(5-phospho-D-ribosyl)imidazole-4-carboxamide. The protein operates within purine metabolism; IMP biosynthesis via de novo pathway; 5-formamido-1-(5-phospho-D-ribosyl)imidazole-4-carboxamide from 5-amino-1-(5-phospho-D-ribosyl)imidazole-4-carboxamide (10-formyl THF route): step 1/1. It functions in the pathway purine metabolism; IMP biosynthesis via de novo pathway; IMP from 5-formamido-1-(5-phospho-D-ribosyl)imidazole-4-carboxamide: step 1/1. This Trichormus variabilis (strain ATCC 29413 / PCC 7937) (Anabaena variabilis) protein is Bifunctional purine biosynthesis protein PurH.